Here is a 587-residue protein sequence, read N- to C-terminus: Probable phosphoribomutase (587 aa).

Residues threonine 49, arginine 53, and 149 to 150 (SH) each bind substrate. The active-site Phosphoserine intermediate is the serine 149. 4 residues coordinate Mg(2+): serine 149, aspartate 306, aspartate 308, and aspartate 310. Serine 149 is subject to Phosphoserine. Substrate contacts are provided by residues 310-311 (DR), threonine 380, 404-406 (EEA), and lysine 418.

This sequence belongs to the phosphohexose mutase family. It depends on Mg(2+) as a cofactor.

Its subcellular location is the cytoplasm. The protein resides in the nucleus. The catalysed reaction is alpha-D-ribose 1-phosphate = D-ribose 5-phosphate. Its function is as follows. Converts ribose 1-phosphate to ribose 5-phosphate. Involved in ribose salvage via the pentose phosphate pathway. This Schizosaccharomyces pombe (strain 972 / ATCC 24843) (Fission yeast) protein is Probable phosphoribomutase.